Here is a 325-residue protein sequence, read N- to C-terminus: Dehydrogenase/reductase SDR family member 7B (325 aa).

Topologically, residues 1 to 17 are cytoplasmic; it reads MVSAATRKSLLRARVMD. A helical; Signal-anchor for type II membrane protein transmembrane segment spans residues 18-38; that stretch reads FITSTAILPLLLGCVGLFSLF. At 39–325 the chain is on the lumenal side; the sequence is KLLQWLRMRA…ARKERKSKHS (287 aa). Residues serine 62 and leucine 64 each contribute to the NAD(+) site. Substrate is bound at residue serine 194. Tyrosine 207, lysine 211, and threonine 242 together coordinate NAD(+). Residue tyrosine 207 is the Proton acceptor of the active site.

This sequence belongs to the short-chain dehydrogenases/reductases (SDR) family.

It localises to the endoplasmic reticulum membrane. Putative oxidoreductase. The chain is Dehydrogenase/reductase SDR family member 7B (DHRS7B) from Bos taurus (Bovine).